The sequence spans 166 residues: Endoribonuclease YbeY (166 aa).

Zn(2+) is bound by residues His-129, His-133, and His-139.

The protein belongs to the endoribonuclease YbeY family. Zn(2+) serves as cofactor.

The protein localises to the cytoplasm. In terms of biological role, single strand-specific metallo-endoribonuclease involved in late-stage 70S ribosome quality control and in maturation of the 3' terminus of the 16S rRNA. In Mesorhizobium japonicum (strain LMG 29417 / CECT 9101 / MAFF 303099) (Mesorhizobium loti (strain MAFF 303099)), this protein is Endoribonuclease YbeY.